We begin with the raw amino-acid sequence, 226 residues long: Protein-L-isoaspartate O-methyltransferase (226 aa).

Residue Ser-66 is part of the active site.

This sequence belongs to the methyltransferase superfamily. L-isoaspartyl/D-aspartyl protein methyltransferase family.

It localises to the cytoplasm. The enzyme catalyses [protein]-L-isoaspartate + S-adenosyl-L-methionine = [protein]-L-isoaspartate alpha-methyl ester + S-adenosyl-L-homocysteine. Functionally, catalyzes the methyl esterification of L-isoaspartyl residues in peptides and proteins that result from spontaneous decomposition of normal L-aspartyl and L-asparaginyl residues. It plays a role in the repair and/or degradation of damaged proteins. The chain is Protein-L-isoaspartate O-methyltransferase from Methanopyrus kandleri (strain AV19 / DSM 6324 / JCM 9639 / NBRC 100938).